A 382-amino-acid chain; its full sequence is Protein delta homolog 2 (382 aa).

Positions 1–26 are cleaved as a signal peptide; it reads MPSGCRCLNLVCLLCILGATSQPARA. 4 EGF-like domains span residues 27–58, 62–89, 91–129, and 131–172; these read DDCS…LHCE, RMPG…KFCD, DEHI…RGCE, and KAGP…AHCE. Residues 27-305 are Extracellular-facing; the sequence is DDCSSHCDLA…RQEAGLGESS (279 aa). Cystine bridges form between cysteine 29-cysteine 40, cysteine 33-cysteine 46, cysteine 48-cysteine 57, cysteine 66-cysteine 71, cysteine 79-cysteine 88, cysteine 95-cysteine 107, cysteine 101-cysteine 117, cysteine 119-cysteine 128, cysteine 135-cysteine 148, cysteine 142-cysteine 160, cysteine 162-cysteine 171, cysteine 178-cysteine 189, cysteine 183-cysteine 198, cysteine 200-cysteine 209, cysteine 216-cysteine 227, cysteine 221-cysteine 236, and cysteine 238-cysteine 247. Asparagine 157 carries an N-linked (GlcNAc...) asparagine glycan. The EGF-like 5; calcium-binding domain occupies 174-210; sequence NVDDCLMRPCANGATCIDGINRFSCLCPEGFAGRFCT. One can recognise an EGF-like 6; calcium-binding domain in the interval 212-248; sequence NLDDCASRPCQRGARCRDRVHDFDCLCPSGYGGKTCE. A helical transmembrane segment spans residues 306–326; the sequence is LVALVVFGSLTAALVLATVLL. Residues 327–382 are Cytoplasmic-facing; it reads TLRAWRRGICPTGPCCDPAPHYAPARQDQECQVSMLPAGFPLSPDLPPEPGKTTAL.

It localises to the membrane. Functionally, regulates adipogenesis. The protein is Protein delta homolog 2 (Dlk2) of Rattus norvegicus (Rat).